Reading from the N-terminus, the 309-residue chain is Aspartate carbamoyltransferase catalytic subunit (309 aa).

Positions 59 and 60 each coordinate carbamoyl phosphate. K87 provides a ligand contact to L-aspartate. Carbamoyl phosphate contacts are provided by R109, H139, and Q142. Residues R172 and R224 each coordinate L-aspartate. Residues A265 and P266 each coordinate carbamoyl phosphate.

It belongs to the aspartate/ornithine carbamoyltransferase superfamily. ATCase family. As to quaternary structure, heterododecamer (2C3:3R2) of six catalytic PyrB chains organized as two trimers (C3), and six regulatory PyrI chains organized as three dimers (R2).

The enzyme catalyses carbamoyl phosphate + L-aspartate = N-carbamoyl-L-aspartate + phosphate + H(+). It participates in pyrimidine metabolism; UMP biosynthesis via de novo pathway; (S)-dihydroorotate from bicarbonate: step 2/3. Its function is as follows. Catalyzes the condensation of carbamoyl phosphate and aspartate to form carbamoyl aspartate and inorganic phosphate, the committed step in the de novo pyrimidine nucleotide biosynthesis pathway. The protein is Aspartate carbamoyltransferase catalytic subunit of Streptococcus uberis (strain ATCC BAA-854 / 0140J).